Consider the following 124-residue polypeptide: Large ribosomal subunit protein uL18 (124 aa).

Belongs to the universal ribosomal protein uL18 family. As to quaternary structure, part of the 50S ribosomal subunit; part of the 5S rRNA/L5/L18/L25 subcomplex. Contacts the 5S and 23S rRNAs.

In terms of biological role, this is one of the proteins that bind and probably mediate the attachment of the 5S RNA into the large ribosomal subunit, where it forms part of the central protuberance. This is Large ribosomal subunit protein uL18 from Parafrankia sp. (strain EAN1pec).